A 512-amino-acid chain; its full sequence is L-aspartate oxidase (512 aa).

FAD is bound by residues 17-20 (SGLA) and 46-53 (SSAWAQGG). The active-site Proton donor/acceptor is the arginine 278. FAD is bound by residues glutamate 361 and 377–378 (SL).

Belongs to the FAD-dependent oxidoreductase 2 family. NadB subfamily. FAD serves as cofactor.

The protein resides in the cytoplasm. It carries out the reaction L-aspartate + O2 = iminosuccinate + H2O2. Its pathway is cofactor biosynthesis; NAD(+) biosynthesis; iminoaspartate from L-aspartate (oxidase route): step 1/1. Functionally, catalyzes the oxidation of L-aspartate to iminoaspartate, the first step in the de novo biosynthesis of NAD(+). This Xylella fastidiosa (strain 9a5c) protein is L-aspartate oxidase (nadB).